The chain runs to 136 residues: MFQSLIAIDYGKARIGISSGQMITKTATPIGTVEAYDGVPNWIELDKIIKCWNPSDIIIGLPLDTQNFETDITKSAKDFAKEVQQRYQRKVHLINEAYSTREARWRLEEVKSKKVSHIKVDALAACVILETWMSEN.

It belongs to the YqgF nuclease family.

The protein resides in the cytoplasm. Could be a nuclease involved in processing of the 5'-end of pre-16S rRNA. This chain is Putative pre-16S rRNA nuclease, found in Francisella tularensis subsp. tularensis (strain FSC 198).